We begin with the raw amino-acid sequence, 670 residues long: Protein ACCELERATED CELL DEATH 6 (670 aa).

At 1-456 (MDSSGADLDR…PNYIFHERWT (456 aa)) the chain is on the cytoplasmic side. The interval 18–47 (LVSHDQRKDFSHSGGVGTTSPTGDTEPVPK) is disordered. ANK repeat units follow at residues 66–95 (EMTP…PMER), 100–129 (TGDS…CLLF), 134–163 (SRQT…SALA), 182–211 (DGNT…DAPF), 216–248 (KGIS…NVDR), 260–290 (QGNK…SLMD), 295–325 (DGRT…GVYV), 329–358 (DGSF…ASKY), 363–391 (LGQN…DTKH), and 399–428 (DGNT…EILK). A helical membrane pass occupies residues 457–477 (LALLLYAIHSSGFESVKSLTI). Residues 478–492 (QSVPLDPKKNRHYVN) lie on the Extracellular side of the membrane. The helical transmembrane segment at 493–513 (ALLVVAALVATVTFAAGFTIP) threads the bilayer. The Cytoplasmic portion of the chain corresponds to 514-537 (GGYISDSKKPNLGRATLATNPTLF). Residues 538–558 (IFLLFDILAMQSSVATICTLI) form a helical membrane-spanning segment. Residues 559-577 (WAQLGDLALILKSLHVALP) are Extracellular-facing. Residues 578-598 (LLLFSLLCMPVAFLFGVITAI) traverse the membrane as a helical segment. The Cytoplasmic portion of the chain corresponds to 599 to 602 (AHVK). Residues 603–623 (WLLVTISIISGGFFLFAIFIL) traverse the membrane as a helical segment. The Extracellular segment spans residues 624–638 (GPHVMLQRSHLPPSS). The chain crosses the membrane as a helical span at residues 639–659 (GIFLKTFMLTIDISELFVILI). Topologically, residues 660 to 670 (KACFGCVACSE) are cytoplasmic.

As to quaternary structure, component of large complexes containing, at least, FLS2, HSP70 and ACD6 in endoplasmic reticulum, plasma membrane and soluble fraction. Associated with HSP70 proteins during endoplasmic reticulum-associated degradation (ERAD). Reduced complex levels upon benzothiazole (BTH) treatment. In terms of processing, ubiquitinated. In terms of tissue distribution, basal expression requires light and salicylic acid (SA).

The protein resides in the cell membrane. Its subcellular location is the endoplasmic reticulum membrane. Dose-dependent activator of the defense response against virulent pathogens, including bacteria, fungi and oomycetes, that acts in a positive feedback loop with the defense signal salicylic acid (SA). Regulates the salicylic acid (SA) signaling pathway leading to cell death and modulating cell fate (e.g. cell enlargement and/or cell division). In response to SA signaling, triggers the accumulation of FLS2 at the plasma membrane, thus priming defenses. Involved in SA-dependent freezing signaling and tolerance. The sequence is that of Protein ACCELERATED CELL DEATH 6 from Arabidopsis thaliana (Mouse-ear cress).